The following is a 213-amino-acid chain: Octanoyltransferase (213 aa).

Residues 36–211 form the BPL/LPL catalytic domain; sequence TNTPDEIWLV…KFCQQLGFKL (176 aa). Residues 75-82, 142-144, and 155-157 each bind substrate; these read RGGQVTYH, SLG, and GLA. Catalysis depends on Cys173, which acts as the Acyl-thioester intermediate.

Belongs to the LipB family.

The protein resides in the cytoplasm. The enzyme catalyses octanoyl-[ACP] + L-lysyl-[protein] = N(6)-octanoyl-L-lysyl-[protein] + holo-[ACP] + H(+). It functions in the pathway protein modification; protein lipoylation via endogenous pathway; protein N(6)-(lipoyl)lysine from octanoyl-[acyl-carrier-protein]: step 1/2. Catalyzes the transfer of endogenously produced octanoic acid from octanoyl-acyl-carrier-protein onto the lipoyl domains of lipoate-dependent enzymes. Lipoyl-ACP can also act as a substrate although octanoyl-ACP is likely to be the physiological substrate. The sequence is that of Octanoyltransferase from Photorhabdus laumondii subsp. laumondii (strain DSM 15139 / CIP 105565 / TT01) (Photorhabdus luminescens subsp. laumondii).